Consider the following 442-residue polypeptide: Na(+)/H(+) antiporter NhaA (442 aa).

Transmembrane regions (helical) follow at residues 32–52, 73–93, 111–131, 139–159, 170–190, 193–213, 234–254, 284–304, 316–336, 352–372, and 383–403; these read IGGG…NSPW, LTLA…VAGL, AVPV…YALV, AGWA…LAVI, FLLT…AVVY, HLSI…TLLV, VHAS…AVPV, VAVP…LSGL, VVLG…FLVA, VLGL…IGEL, and HVKI…AVVL. Residues 423-435 are compositionally biased toward basic and acidic residues; the sequence is HDGIPDVYQDLHR. Residues 423-442 are disordered; the sequence is HDGIPDVYQDLHRSSPRPWG.

Belongs to the NhaA Na(+)/H(+) (TC 2.A.33) antiporter family.

Its subcellular location is the cell membrane. It carries out the reaction Na(+)(in) + 2 H(+)(out) = Na(+)(out) + 2 H(+)(in). Na(+)/H(+) antiporter that extrudes sodium in exchange for external protons. In Frankia casuarinae (strain DSM 45818 / CECT 9043 / HFP020203 / CcI3), this protein is Na(+)/H(+) antiporter NhaA.